The primary structure comprises 195 residues: Probable GTP-binding protein EngB (195 aa).

Positions 24-195 (DIPEIALAGR…AAWDAILSKI (172 aa)) constitute an EngB-type G domain. Residues 32-39 (GRSNVGKS), 59-63 (GKTQL), 77-80 (DVPG), 144-147 (TKAD), and 176-178 (FSS) contribute to the GTP site. Positions 39 and 61 each coordinate Mg(2+).

The protein belongs to the TRAFAC class TrmE-Era-EngA-EngB-Septin-like GTPase superfamily. EngB GTPase family. The cofactor is Mg(2+).

In terms of biological role, necessary for normal cell division and for the maintenance of normal septation. The protein is Probable GTP-binding protein EngB of Streptococcus sanguinis (strain SK36).